The following is a 767-amino-acid chain: 5-methyltetrahydropteroyltriglutamate--homocysteine methyltransferase (767 aa).

Residues 17 to 20 and Lys-117 each bind 5-methyltetrahydropteroyltri-L-glutamate; that span reads RELK. L-homocysteine contacts are provided by residues 441–443 and Glu-494; that span reads IGS. L-methionine-binding positions include 441–443 and Glu-494; that span reads IGS. 5-methyltetrahydropteroyltri-L-glutamate-binding positions include 525–526 and Trp-571; that span reads RC. Residue Asp-609 participates in L-homocysteine binding. Asp-609 contacts L-methionine. Glu-615 is a 5-methyltetrahydropteroyltri-L-glutamate binding site. Zn(2+) is bound by residues His-652, Cys-654, and Glu-676. The Proton donor role is filled by His-705. Cys-737 lines the Zn(2+) pocket.

It belongs to the vitamin-B12 independent methionine synthase family. Zn(2+) serves as cofactor.

The enzyme catalyses 5-methyltetrahydropteroyltri-L-glutamate + L-homocysteine = tetrahydropteroyltri-L-glutamate + L-methionine. It functions in the pathway amino-acid biosynthesis; L-methionine biosynthesis via de novo pathway; L-methionine from L-homocysteine (MetE route): step 1/1. In terms of biological role, catalyzes the transfer of a methyl group from 5-methyltetrahydrofolate to homocysteine resulting in methionine formation. The sequence is that of 5-methyltetrahydropteroyltriglutamate--homocysteine methyltransferase from Bifidobacterium longum subsp. infantis (strain ATCC 15697 / DSM 20088 / JCM 1222 / NCTC 11817 / S12).